We begin with the raw amino-acid sequence, 569 residues long: 2-isopropylmalate synthase (569 aa).

Positions 31 to 305 constitute a Pyruvate carboxyltransferase domain; it reads PRWMSTDLRD…APELDFSDID (275 aa). 4 residues coordinate Mg(2+): Asp-40, His-244, His-246, and Asn-280. The segment at 437 to 569 is regulatory domain; it reads RETPLRYVSH…TASASAATEA (133 aa).

Belongs to the alpha-IPM synthase/homocitrate synthase family. LeuA type 2 subfamily. As to quaternary structure, homodimer. Mg(2+) is required as a cofactor.

It localises to the cytoplasm. The catalysed reaction is 3-methyl-2-oxobutanoate + acetyl-CoA + H2O = (2S)-2-isopropylmalate + CoA + H(+). The protein operates within amino-acid biosynthesis; L-leucine biosynthesis; L-leucine from 3-methyl-2-oxobutanoate: step 1/4. Catalyzes the condensation of the acetyl group of acetyl-CoA with 3-methyl-2-oxobutanoate (2-ketoisovalerate) to form 3-carboxy-3-hydroxy-4-methylpentanoate (2-isopropylmalate). The protein is 2-isopropylmalate synthase of Cupriavidus taiwanensis (strain DSM 17343 / BCRC 17206 / CCUG 44338 / CIP 107171 / LMG 19424 / R1) (Ralstonia taiwanensis (strain LMG 19424)).